Reading from the N-terminus, the 323-residue chain is HPr kinase/phosphorylase (323 aa).

Catalysis depends on residues His146 and Lys167. ATP is bound at residue 161–168; that stretch reads GESGLGKS. Ser168 contributes to the Mg(2+) binding site. Asp185 functions as the Proton acceptor; for phosphorylation activity. Proton donor; for dephosphorylation activity in the catalytic mechanism. The tract at residues 209–218 is important for the catalytic mechanism of both phosphorylation and dephosphorylation; it reads LEVRGLGLLD. Glu210 serves as a coordination point for Mg(2+). Arg250 is an active-site residue. The segment at 271-276 is important for the catalytic mechanism of dephosphorylation; sequence QVAAGR.

The protein belongs to the HPrK/P family. Homohexamer. Mg(2+) serves as cofactor.

It carries out the reaction [HPr protein]-L-serine + ATP = [HPr protein]-O-phospho-L-serine + ADP + H(+). The catalysed reaction is [HPr protein]-O-phospho-L-serine + phosphate + H(+) = [HPr protein]-L-serine + diphosphate. Catalyzes the ATP- as well as the pyrophosphate-dependent phosphorylation of a specific serine residue in HPr, a phosphocarrier protein of the phosphoenolpyruvate-dependent sugar phosphotransferase system (PTS). HprK/P also catalyzes the pyrophosphate-producing, inorganic phosphate-dependent dephosphorylation (phosphorolysis) of seryl-phosphorylated HPr (P-Ser-HPr). This Cupriavidus pinatubonensis (strain JMP 134 / LMG 1197) (Cupriavidus necator (strain JMP 134)) protein is HPr kinase/phosphorylase.